A 111-amino-acid chain; its full sequence is Translation initiation factor 1A 1 (111 aa).

Residues 1-26 are disordered; that stretch reads MTLADLKKPTSRATPSTEETFTRVRT. One can recognise an S1-like domain in the interval 22-96; sequence TRVRTPRREN…EKADVIWKYT (75 aa).

Belongs to the eIF-1A family.

Functionally, seems to be required for maximal rate of protein biosynthesis. Enhances ribosome dissociation into subunits and stabilizes the binding of the initiator Met-tRNA(I) to 40 S ribosomal subunits. This Methanosarcina acetivorans (strain ATCC 35395 / DSM 2834 / JCM 12185 / C2A) protein is Translation initiation factor 1A 1 (eIF1A1).